We begin with the raw amino-acid sequence, 332 residues long: Small ribosomal subunit protein uS2 (332 aa).

This sequence belongs to the universal ribosomal protein uS2 family.

This is Small ribosomal subunit protein uS2 from Afipia carboxidovorans (strain ATCC 49405 / DSM 1227 / KCTC 32145 / OM5) (Oligotropha carboxidovorans).